A 276-amino-acid polypeptide reads, in one-letter code: Short-chain dehydrogenase/reductase ATR10 (276 aa).

NADP(+)-binding residues include Ile29, Ser51, Asp78, and Asn105. The active-site Proton donor is the Ser161. 2 residues coordinate NADP(+): Lys185 and Thr214. The active-site Lowers pKa of active site Tyr is Lys185.

The protein belongs to the short-chain dehydrogenases/reductases (SDR) family.

It participates in mycotoxin biosynthesis. Short-chain dehydrogenase/reductase; part of the core atranone cluster (CAC) which products are predicted to catalyze most or all steps of mycotoxin atranone synthesis, starting from geranylgeranyl pyrophosphate (GGPP). The initial cyclization of GGPP to dolabellane is probably performed by the terpene cyclase ATR13. The Baeyer-Villiger oxidation near the end of the atranone synthesis, which converts atranones D and E to atranones F and G is predicted to be catalyzed by the monooxygenase ATR8. Of the CAC's other predicted gene products, the reducing PKS ATR6 might synthesize a polyketide chain. This polyketide is probably transferred onto the atranone backbone by the polyketide transferase ATR5. Other predicted CAC products include 4 oxygenases (ATR2, ATR3, ATR4, and ATR14), 3 short-chain reductases (ATR7, ATR9, and ATR10), and a methyltransferase (ATR12). These may all be involved in the various steps of atranone biosynthesis, although their specific roles must await experimental determination. This chain is Short-chain dehydrogenase/reductase ATR10, found in Stachybotrys chlorohalonatus (strain IBT 40285).